A 243-amino-acid chain; its full sequence is MIKILIPTAKEMKVCQNIARPKLSAQTQIIIDYFSTLTVSDLEDIYRINTSAARCEAQRWQDFKCKQLTLNPAIKLFNGLMYRNIKRHNLSISEAQFMENSVFITSALYGIIPAMTLISPHRLDFNTKIKINNNSLKVFWRENYDTFMQSDDIMVSLLSNEFETVFSPKERQKLIHLNFIEDRDGQLKTHSTISKKARGKCLTAMMENNCQTLEHLKQLRFDGFCYDNELSDSKQLTFVKKQT.

Belongs to the UPF0246 family.

This is UPF0246 protein SAK_2020 from Streptococcus agalactiae serotype Ia (strain ATCC 27591 / A909 / CDC SS700).